A 151-amino-acid polypeptide reads, in one-letter code: SsrA-binding protein (151 aa).

The disordered stretch occupies residues 121 to 151 (GKKLHDKRDTEKDREWQREKQRVMKNQRGAA). Positions 126-142 (DKRDTEKDREWQREKQR) are enriched in basic and acidic residues.

It belongs to the SmpB family.

The protein resides in the cytoplasm. Functionally, required for rescue of stalled ribosomes mediated by trans-translation. Binds to transfer-messenger RNA (tmRNA), required for stable association of tmRNA with ribosomes. tmRNA and SmpB together mimic tRNA shape, replacing the anticodon stem-loop with SmpB. tmRNA is encoded by the ssrA gene; the 2 termini fold to resemble tRNA(Ala) and it encodes a 'tag peptide', a short internal open reading frame. During trans-translation Ala-aminoacylated tmRNA acts like a tRNA, entering the A-site of stalled ribosomes, displacing the stalled mRNA. The ribosome then switches to translate the ORF on the tmRNA; the nascent peptide is terminated with the 'tag peptide' encoded by the tmRNA and targeted for degradation. The ribosome is freed to recommence translation, which seems to be the essential function of trans-translation. This Chromobacterium violaceum (strain ATCC 12472 / DSM 30191 / JCM 1249 / CCUG 213 / NBRC 12614 / NCIMB 9131 / NCTC 9757 / MK) protein is SsrA-binding protein.